A 47-amino-acid polypeptide reads, in one-letter code: Bacteriocin curvaticin DN317 (47 aa).

It belongs to the bacteriocin class IIA/YGNGV family.

It localises to the secreted. Has bactericidal activity against various Gram-negative Campylobacter, and the Gram-positive L.monocytogenes and B.subtilis. In vitro, inhibits C.jejuni strain ATCC 33560 (MIC=27.3 ug/ml). This is Bacteriocin curvaticin DN317 from Latilactobacillus curvatus (Lactobacillus curvatus).